We begin with the raw amino-acid sequence, 231 residues long: Small ribosomal subunit protein uS3 (231 aa).

A KH type-2 domain is found at Ile-39–Arg-107.

The protein belongs to the universal ribosomal protein uS3 family. As to quaternary structure, part of the 30S ribosomal subunit. Forms a tight complex with proteins S10 and S14.

Binds the lower part of the 30S subunit head. Binds mRNA in the 70S ribosome, positioning it for translation. This is Small ribosomal subunit protein uS3 from Novosphingobium aromaticivorans (strain ATCC 700278 / DSM 12444 / CCUG 56034 / CIP 105152 / NBRC 16084 / F199).